A 458-amino-acid polypeptide reads, in one-letter code: Periphilin-1 (458 aa).

2 stretches are compositionally biased toward basic and acidic residues: residues M1–P18 and E63–R107. Disordered stretches follow at residues M1 to R51 and E63 to D284. Residues R103–K109 carry the Nuclear localization signal motif. K109 participates in a covalent cross-link: Glycyl lysine isopeptide (Lys-Gly) (interchain with G-Cter in SUMO2). Residues S110, S114, S133, and S140 each carry the phosphoserine modification. The segment covering Y116–H142 has biased composition (basic and acidic residues). A compositionally biased stretch (low complexity) spans S143 to Y154. Residue K160 forms a Glycyl lysine isopeptide (Lys-Gly) (interchain with G-Cter in SUMO2) linkage. A phosphoserine mark is found at S161 and S167. Residue K180 forms a Glycyl lysine isopeptide (Lys-Gly) (interchain with G-Cter in SUMO2) linkage. A compositionally biased stretch (basic and acidic residues) spans R181–P194. S197 is subject to Phosphoserine. K199 is covalently cross-linked (Glycyl lysine isopeptide (Lys-Gly) (interchain with G-Cter in SUMO2)). 2 positions are modified to phosphoserine: S201 and S205. Residues S205–S215 are compositionally biased toward low complexity. Residues V217–A230 are compositionally biased toward basic and acidic residues. A Glycyl lysine isopeptide (Lys-Gly) (interchain with G-Cter in SUMO2) cross-link involves residue K227. N6-acetyllysine; alternate occurs at positions 235 and 240. Residues K235 and K240 each participate in a glycyl lysine isopeptide (Lys-Gly) (interchain with G-Cter in SUMO2); alternate cross-link. Residues A237–E246 show a composition bias toward basic and acidic residues. Phosphoserine is present on S325. A Glycyl lysine isopeptide (Lys-Gly) (interchain with G-Cter in SUMO2) cross-link involves residue K328. The tract at residues G345–P406 is disordered. Residues P377 to L386 are compositionally biased toward pro residues. Residues P388–Q398 are compositionally biased toward basic residues. K453 is covalently cross-linked (Glycyl lysine isopeptide (Lys-Gly) (interchain with G-Cter in SUMO2)).

As to quaternary structure, homodimer. Component of the HUSH complex; at least composed of TASOR, PPHLN1 and MPHOSPH8. Interacts with SIN3A and HDAC1. May interact with PPL. In terms of processing, substrate of transglutaminase (in vitro). As to expression, ubiquitous.

It localises to the nucleus. The protein localises to the cytoplasm. It is found in the chromosome. Component of the HUSH complex, a multiprotein complex that mediates epigenetic repression. The HUSH complex is recruited to genomic loci rich in H3K9me3 and is probably required to maintain transcriptional silencing by promoting recruitment of SETDB1, a histone methyltransferase that mediates further deposition of H3K9me3. In the HUSH complex, contributes to the maintenance of the complex at chromatin. Acts as a transcriptional corepressor and regulates the cell cycle, probably via the HUSH complex. The HUSH complex is also involved in the silencing of unintegrated retroviral DNA: some part of the retroviral DNA formed immediately after infection remains unintegrated in the host genome and is transcriptionally repressed. May be involved in epithelial differentiation by contributing to epidermal integrity and barrier formation. The chain is Periphilin-1 from Homo sapiens (Human).